Consider the following 856-residue polypeptide: Dual specificity protein kinase TTK (856 aa).

Met1 bears the N-acetylmethionine mark. The residue at position 7 (Ser7) is a Phosphoserine. A Phosphothreonine modification is found at Thr33. Phosphoserine is present on residues Ser37, Ser80, Ser281, Ser317, and Ser321. Position 360 is a phosphothreonine (Thr360). Ser363 carries the phosphoserine modification. The tract at residues 369–392 (EETKEYQEPEVPESNQKQWQSKRK) is disordered. Phosphoserine is present on residues Ser393, Ser435, and Ser454. A Protein kinase domain is found at 524–790 (YSILKQIGSG…IPELLAHPYV (267 aa)). ATP is bound by residues 530 to 538 (IGSGGSSKV) and Lys552. The Proton acceptor role is filled by Asp646. Ser820 bears the Phosphoserine mark. Low complexity predominate over residues 835-846 (YSGGESHNSSSS). The segment at 835-856 (YSGGESHNSSSSKTFGKKREKK) is disordered.

It belongs to the protein kinase superfamily. Ser/Thr protein kinase family. Interacts with TPR; the interactions occurs in a microtubule-independent manner. Interacts with MAD1L1 and MAD2L1.

The enzyme catalyses L-seryl-[protein] + ATP = O-phospho-L-seryl-[protein] + ADP + H(+). It carries out the reaction L-threonyl-[protein] + ATP = O-phospho-L-threonyl-[protein] + ADP + H(+). The catalysed reaction is L-tyrosyl-[protein] + ATP = O-phospho-L-tyrosyl-[protein] + ADP + H(+). Its activity is regulated as follows. Inhibited by the ATP-competitive kinase inhibitor, SP600125. Functionally, involved in mitotic spindle assembly checkpoint signaling, a process that delays anaphase until chromosomes are bioriented on the spindle, and in the repair of incorrect mitotic kinetochore-spindle microtubule attachments. Phosphorylates MAD1L1 to promote the mitotic spindle assembly checkpoint. Phosphorylates CDCA8/Borealin leading to enhanced AURKB activity at the kinetochore. Phosphorylates SKA3 at 'Ser-34' leading to dissociation of the SKA complex from microtubules and destabilization of microtubule-kinetochore attachments. Phosphorylates KNL1, KNTC1 and autophosphorylates. Phosphorylates MCRS1 which enhances recruitment of KIF2A to the minus end of spindle microtubules and promotes chromosome alignment. The polypeptide is Dual specificity protein kinase TTK (TTK) (Macaca fascicularis (Crab-eating macaque)).